The chain runs to 431 residues: Serine--tRNA ligase (431 aa).

A disordered region spans residues 41-66 (QSRTQELQAERNARSKSIGEAARRGE). 240–242 (TSE) is a binding site for L-serine. 271 to 273 (RSE) is an ATP binding site. An L-serine-binding site is contributed by glutamate 294. 358–361 (EISS) is an ATP binding site. Residue serine 392 coordinates L-serine.

This sequence belongs to the class-II aminoacyl-tRNA synthetase family. Type-1 seryl-tRNA synthetase subfamily. As to quaternary structure, homodimer. The tRNA molecule binds across the dimer.

It localises to the cytoplasm. It catalyses the reaction tRNA(Ser) + L-serine + ATP = L-seryl-tRNA(Ser) + AMP + diphosphate + H(+). The catalysed reaction is tRNA(Sec) + L-serine + ATP = L-seryl-tRNA(Sec) + AMP + diphosphate + H(+). It functions in the pathway aminoacyl-tRNA biosynthesis; selenocysteinyl-tRNA(Sec) biosynthesis; L-seryl-tRNA(Sec) from L-serine and tRNA(Sec): step 1/1. Its function is as follows. Catalyzes the attachment of serine to tRNA(Ser). Is also able to aminoacylate tRNA(Sec) with serine, to form the misacylated tRNA L-seryl-tRNA(Sec), which will be further converted into selenocysteinyl-tRNA(Sec). The chain is Serine--tRNA ligase from Aeromonas hydrophila subsp. hydrophila (strain ATCC 7966 / DSM 30187 / BCRC 13018 / CCUG 14551 / JCM 1027 / KCTC 2358 / NCIMB 9240 / NCTC 8049).